The following is a 99-amino-acid chain: Aspartyl/glutamyl-tRNA(Asn/Gln) amidotransferase subunit C (99 aa).

The protein belongs to the GatC family. Heterotrimer of A, B and C subunits.

It carries out the reaction L-glutamyl-tRNA(Gln) + L-glutamine + ATP + H2O = L-glutaminyl-tRNA(Gln) + L-glutamate + ADP + phosphate + H(+). The catalysed reaction is L-aspartyl-tRNA(Asn) + L-glutamine + ATP + H2O = L-asparaginyl-tRNA(Asn) + L-glutamate + ADP + phosphate + 2 H(+). Allows the formation of correctly charged Asn-tRNA(Asn) or Gln-tRNA(Gln) through the transamidation of misacylated Asp-tRNA(Asn) or Glu-tRNA(Gln) in organisms which lack either or both of asparaginyl-tRNA or glutaminyl-tRNA synthetases. The reaction takes place in the presence of glutamine and ATP through an activated phospho-Asp-tRNA(Asn) or phospho-Glu-tRNA(Gln). This Burkholderia ambifaria (strain MC40-6) protein is Aspartyl/glutamyl-tRNA(Asn/Gln) amidotransferase subunit C.